We begin with the raw amino-acid sequence, 250 residues long: 2,3-bisphosphoglycerate-dependent phosphoglycerate mutase (250 aa).

Residues 10 to 17 (RHGESQWN), 23 to 24 (TG), arginine 62, 89 to 92 (ERHY), lysine 100, 116 to 117 (RR), and 185 to 186 (GN) contribute to the substrate site. Histidine 11 functions as the Tele-phosphohistidine intermediate in the catalytic mechanism. The active-site Proton donor/acceptor is the glutamate 89.

This sequence belongs to the phosphoglycerate mutase family. BPG-dependent PGAM subfamily. In terms of assembly, homodimer.

It catalyses the reaction (2R)-2-phosphoglycerate = (2R)-3-phosphoglycerate. The protein operates within carbohydrate degradation; glycolysis; pyruvate from D-glyceraldehyde 3-phosphate: step 3/5. Catalyzes the interconversion of 2-phosphoglycerate and 3-phosphoglycerate. The chain is 2,3-bisphosphoglycerate-dependent phosphoglycerate mutase from Citrobacter koseri (strain ATCC BAA-895 / CDC 4225-83 / SGSC4696).